A 148-amino-acid polypeptide reads, in one-letter code: Macrodomain Ter protein (148 aa).

The protein belongs to the MatP family. In terms of assembly, homodimer.

The protein resides in the cytoplasm. Required for spatial organization of the terminus region of the chromosome (Ter macrodomain) during the cell cycle. Prevents early segregation of duplicated Ter macrodomains during cell division. Binds specifically to matS, which is a 13 bp signature motif repeated within the Ter macrodomain. This is Macrodomain Ter protein from Pasteurella multocida (strain Pm70).